A 326-amino-acid polypeptide reads, in one-letter code: Beta-ketoacyl-[acyl-carrier-protein] synthase III (326 aa).

Active-site residues include C115 and H253. Residues 254 to 258 (QANKR) are ACP-binding. The active site involves N283.

The protein belongs to the thiolase-like superfamily. FabH family. Homodimer.

The protein resides in the cytoplasm. It carries out the reaction malonyl-[ACP] + acetyl-CoA + H(+) = 3-oxobutanoyl-[ACP] + CO2 + CoA. Its pathway is lipid metabolism; fatty acid biosynthesis. Functionally, catalyzes the condensation reaction of fatty acid synthesis by the addition to an acyl acceptor of two carbons from malonyl-ACP. Catalyzes the first condensation reaction which initiates fatty acid synthesis and may therefore play a role in governing the total rate of fatty acid production. Possesses both acetoacetyl-ACP synthase and acetyl transacylase activities. Its substrate specificity determines the biosynthesis of branched-chain and/or straight-chain of fatty acids. This Bradyrhizobium diazoefficiens (strain JCM 10833 / BCRC 13528 / IAM 13628 / NBRC 14792 / USDA 110) protein is Beta-ketoacyl-[acyl-carrier-protein] synthase III.